Reading from the N-terminus, the 137-residue chain is Putative pre-16S rRNA nuclease (137 aa).

The protein belongs to the YqgF nuclease family.

Its subcellular location is the cytoplasm. Its function is as follows. Could be a nuclease involved in processing of the 5'-end of pre-16S rRNA. The protein is Putative pre-16S rRNA nuclease of Bacillus cereus (strain AH187).